The following is a 49-amino-acid chain: Large ribosomal subunit protein bL33B (49 aa).

The protein belongs to the bacterial ribosomal protein bL33 family.

This is Large ribosomal subunit protein bL33B from Lactobacillus delbrueckii subsp. bulgaricus (strain ATCC BAA-365 / Lb-18).